Reading from the N-terminus, the 78-residue chain is Large ribosomal subunit protein bL28 (78 aa).

The disordered stretch occupies residues 1 to 26 (MSAYCQVTGRKPSFGKSVSHSHRRTN).

The protein belongs to the bacterial ribosomal protein bL28 family.

This Corynebacterium jeikeium (strain K411) protein is Large ribosomal subunit protein bL28.